The sequence spans 300 residues: Protoheme IX farnesyltransferase (300 aa).

9 helical membrane passes run 21–43 (PRVVELLLLTTVPTMILAQRGVP), 45–65 (PLSVLSVLLGGAMSAGAAGAF), 94–114 (ASLIFAWMLCVISVLWFLLFV), 117–137 (LSALLSAIAVFLYAFFYSIVL), 145–167 (IVWGGLAGCMPVLIAWAAVTGSI), 171–193 (AIVLFAVVFLWTPPHYWPLSIHY), 213–233 (LVVLQVLLYAFAVVACTLLLI), 235–255 (VAHMTPLYGLFSAVLGAWFVY), and 272–292 (AMHIFSLSNTYLSLVFLSVGI).

It belongs to the UbiA prenyltransferase family. Protoheme IX farnesyltransferase subfamily.

It is found in the cell membrane. The enzyme catalyses heme b + (2E,6E)-farnesyl diphosphate + H2O = Fe(II)-heme o + diphosphate. Its pathway is porphyrin-containing compound metabolism; heme O biosynthesis; heme O from protoheme: step 1/1. Functionally, converts heme B (protoheme IX) to heme O by substitution of the vinyl group on carbon 2 of heme B porphyrin ring with a hydroxyethyl farnesyl side group. The chain is Protoheme IX farnesyltransferase from Tropheryma whipplei (strain TW08/27) (Whipple's bacillus).